The chain runs to 263 residues: MRIFRPWRLRCPALHLPSFPTFSIKCSLPPLPTDEDMCKSVTTGEWKKVFYEKMEEVKPADSWDFIIDPNLKHNVLAPGWKQYLELHASGRFHCSWCWHTWQSPHVVILFHMYLDKAQRAGSVRMRVFKQLCYECGTARLDESSMLEENIESLVDNLITSLREQCYGERGGHYRIHVASRQDNRRHRGEFCEACQEGIVHWKPSEKLLEEEATTYTFSRAPSPTKPQAETGSGCNFCSIPWCLFWATVLMLIIYLQFSFRTSV.

Residues 1–238 (MRIFRPWRLR…ETGSGCNFCS (238 aa)) lie on the Cytoplasmic side of the membrane. A 3CxxC-type zinc finger spans residues 88–197 (ASGRFHCSWC…GEFCEACQEG (110 aa)). Residues 239 to 259 (IPWCLFWATVLMLIIYLQFSF) form a helical membrane-spanning segment. Topologically, residues 260-263 (RTSV) are extracellular.

The protein belongs to the TMEM7 family. In terms of assembly, interacts with olfactory receptors. Predominantly expressed in olfactory and vomeronasal organs, in mature olfactory sensory neurons.

The protein localises to the cell membrane. Functionally, specifically promotes functional cell surface expression of olfactory receptors, but not of other GPCRs. This is Receptor-transporting protein 1 (Rtp1) from Mus musculus (Mouse).